The chain runs to 71 residues: Non-structural protein 3x (71 aa).

This chain is Non-structural protein 3x, found in Canis lupus familiaris (Dog).